Consider the following 453-residue polypeptide: Phosphoglucosamine mutase (453 aa).

The Phosphoserine intermediate role is filled by Ser108. Residues Ser108, Asp247, Asp249, and Asp251 each coordinate Mg(2+). At Ser108 the chain carries Phosphoserine.

The protein belongs to the phosphohexose mutase family. Mg(2+) is required as a cofactor. In terms of processing, activated by phosphorylation.

The catalysed reaction is alpha-D-glucosamine 1-phosphate = D-glucosamine 6-phosphate. In terms of biological role, catalyzes the conversion of glucosamine-6-phosphate to glucosamine-1-phosphate. The chain is Phosphoglucosamine mutase from Methylobacillus flagellatus (strain ATCC 51484 / DSM 6875 / VKM B-1610 / KT).